Here is a 169-residue protein sequence, read N- to C-terminus: Der GTPase-activating protein YihI (169 aa).

Disordered regions lie at residues Met1–Glu98 and Gly144–Asn169. Residues Ser10–Lys19 are compositionally biased toward basic residues. Residues Thr20–Asp30 are compositionally biased toward basic and acidic residues. Residues Arg31–His40 are compositionally biased toward basic residues. The segment covering Gly49 to Gln58 has biased composition (polar residues). Positions Tyr147–Gln159 are enriched in acidic residues. The segment covering Glu160–Asn169 has biased composition (basic and acidic residues).

The protein belongs to the YihI family. In terms of assembly, interacts with Der.

Its function is as follows. A GTPase-activating protein (GAP) that modifies Der/EngA GTPase function. May play a role in ribosome biogenesis. The chain is Der GTPase-activating protein YihI from Escherichia coli O139:H28 (strain E24377A / ETEC).